Consider the following 1191-residue polypeptide: WASH complex subunit homolog 5 (1191 aa).

This sequence belongs to the strumpellin family. In terms of assembly, component of the WASH complex.

Its subcellular location is the early endosome. Acts at least in part as component of the WASH complex which may regulate wash nucleation-promoting factor (NPF) activity and is required for its membrane targeting during endosomal sorting. During embryogenesis, not involved in the wash-dependent developmental migration of hemocytes anteriorly from the tail. The protein is WASH complex subunit homolog 5 of Drosophila melanogaster (Fruit fly).